The following is a 95-amino-acid chain: uncharacterized protein (95 aa).

A signal peptide spans 1–19; it reads MAILMLSLQLILLLIPSIS. Asn-38 and Asn-41 each carry an N-linked (GlcNAc...) asparagine glycan.

It localises to the secreted. This is an uncharacterized protein from Homo sapiens (Human).